Consider the following 328-residue polypeptide: Probable voltage-gated potassium channel subunit beta (328 aa).

Residues Trp21, Gln27, and Asp49 each coordinate NADP(+). Tyr54 functions as the Proton donor/acceptor in the catalytic mechanism. NADP(+)-binding residues include Ser152, Gln178, Trp207, Ser208, Pro209, Leu210, Ala211, Lys218, Arg229, Gly285, Thr287, Gln291, Glu294, and Asn295.

It belongs to the shaker potassium channel beta subunit family. In terms of assembly, forms heteromultimeric complexes with potassium channel alpha subunits. In terms of tissue distribution, expressed in roots, leaves and flowers (at protein level).

Probable accessory potassium channel protein which modulates the activity of the pore-forming alpha subunit. This chain is Probable voltage-gated potassium channel subunit beta (KAB1), found in Arabidopsis thaliana (Mouse-ear cress).